A 211-amino-acid polypeptide reads, in one-letter code: Cytochrome c biogenesis ATP-binding export protein CcmA 2 (211 aa).

One can recognise an ABC transporter domain in the interval 6 to 208; the sequence is LEARELGVRR…GAVLDLATDA (203 aa). Residue 38 to 45 coordinates ATP; sequence GPNGAGKT.

The protein belongs to the ABC transporter superfamily. CcmA exporter (TC 3.A.1.107) family. The complex is composed of two ATP-binding proteins (CcmA) and two transmembrane proteins (CcmB).

Its subcellular location is the cell inner membrane. The catalysed reaction is heme b(in) + ATP + H2O = heme b(out) + ADP + phosphate + H(+). Its function is as follows. Part of the ABC transporter complex CcmAB involved in the biogenesis of c-type cytochromes; once thought to export heme, this seems not to be the case, but its exact role is uncertain. Responsible for energy coupling to the transport system. This is Cytochrome c biogenesis ATP-binding export protein CcmA 2 from Cupriavidus metallidurans (strain ATCC 43123 / DSM 2839 / NBRC 102507 / CH34) (Ralstonia metallidurans).